Here is a 175-residue protein sequence, read N- to C-terminus: Protein GrpE (175 aa).

Residues 1-35 form a disordered region; it reads MSEQKQEIENENAQNSENLQDDLQDNEKNETNELQ. The segment covering 25-35 has biased composition (basic and acidic residues); the sequence is DNEKNETNELQ.

Belongs to the GrpE family. In terms of assembly, homodimer.

It localises to the cytoplasm. Functionally, participates actively in the response to hyperosmotic and heat shock by preventing the aggregation of stress-denatured proteins, in association with DnaK and GrpE. It is the nucleotide exchange factor for DnaK and may function as a thermosensor. Unfolded proteins bind initially to DnaJ; upon interaction with the DnaJ-bound protein, DnaK hydrolyzes its bound ATP, resulting in the formation of a stable complex. GrpE releases ADP from DnaK; ATP binding to DnaK triggers the release of the substrate protein, thus completing the reaction cycle. Several rounds of ATP-dependent interactions between DnaJ, DnaK and GrpE are required for fully efficient folding. The sequence is that of Protein GrpE from Campylobacter jejuni (strain RM1221).